Reading from the N-terminus, the 115-residue chain is MSRYTGPRLKIMRALGVDLPGLGRKSMQERNQPPGQHGARKVAARKSEFGLQLMEKQKLRYNYGVTERQLRRVVLDAKRQKGVTGGKIVELLERRLDNLVFRAGFAPTTRLRANS.

Belongs to the universal ribosomal protein uS4 family.

The sequence is that of Ribosomal protein uS4-like from Azoarcus sp. (strain BH72).